The sequence spans 261 residues: Guanine nucleotide exchange factor BopE (261 aa).

Residues 241 to 253 (RRAAQDASRDEKG) show a composition bias toward basic and acidic residues. The tract at residues 241–261 (RRAAQDASRDEKGAANAADGA) is disordered.

It belongs to the GEF (guanine exchange factor) SopE family. As to quaternary structure, monomer. Interacts with human CDC42.

It localises to the secreted. Functionally, activator for both CDC42 and RAC1 by directly interacting with these Rho GTPases and acting as a guanine nucleotide exchange factor (GEF). This activation results in actin cytoskeleton rearrangements and stimulates membrane ruffling, thus promoting bacterial entry into non-phagocytic cells. The polypeptide is Guanine nucleotide exchange factor BopE (bopE) (Burkholderia thailandensis (strain ATCC 700388 / DSM 13276 / CCUG 48851 / CIP 106301 / E264)).